The chain runs to 346 residues: L-threonine 3-dehydrogenase (346 aa).

C42 serves as a coordination point for Zn(2+). Catalysis depends on charge relay system residues T44 and H47. Zn(2+)-binding residues include H67, E68, C97, C100, C103, and C111. NAD(+) is bound by residues I179, D199, R204, 266–268 (LSL), and 291–292 (IT).

The protein belongs to the zinc-containing alcohol dehydrogenase family. In terms of assembly, homotetramer. It depends on Zn(2+) as a cofactor.

The protein localises to the cytoplasm. The enzyme catalyses L-threonine + NAD(+) = (2S)-2-amino-3-oxobutanoate + NADH + H(+). It participates in amino-acid degradation; L-threonine degradation via oxydo-reductase pathway; glycine from L-threonine: step 1/2. Its function is as follows. Catalyzes the NAD(+)-dependent oxidation of L-threonine to 2-amino-3-ketobutyrate. In Bacillus licheniformis (strain ATCC 14580 / DSM 13 / JCM 2505 / CCUG 7422 / NBRC 12200 / NCIMB 9375 / NCTC 10341 / NRRL NRS-1264 / Gibson 46), this protein is L-threonine 3-dehydrogenase.